An 870-amino-acid chain; its full sequence is NEDD4-like E3 ubiquitin-protein ligase WWP2 (870 aa).

One can recognise a C2 domain in the interval 1-117; it reads MASASSSRAG…KNNGGKMENT (117 aa). The disordered stretch occupies residues 150-300; it reads SVPNGSAVTD…QLPAAAQAPD (151 aa). Over residues 152–171 the composition is skewed to polar residues; the sequence is PNGSAVTDGSQPPSRESSGT. The span at 198-208 shows a compositional bias: low complexity; it reads GGSARTATAAS. Ser-211 is subject to Phosphoserine. Composition is skewed to polar residues over residues 222 to 235 and 262 to 289; these read VKNSSSSGLANGTV and SVSSNPNTTSLPAQSTPAEGEEASTSGT. A compositionally biased stretch (low complexity) spans 290–300; the sequence is QQLPAAAQAPD. 4 consecutive WW domains span residues 300-333, 330-363, 405-437, and 444-477; these read DALPAGWEQRELPNGRVYYVDHNTKTTTWERPLP, RPLPPGWEKRTDPRGRFYYVDHNTRTTTWQRPTA, GPLPPGWEKRQDNGRVYYVNHNTRTTQWEDPRT, and PALPPGWEMKYTSEGVRYFVDHNTRTTTFKDPRP. An HECT domain is found at 536–870; it reads KPYDLRRRLY…IEETEGFGQE (335 aa). The active-site Glycyl thioester intermediate is Cys-838.

Interacts with SCNN1A, SCNN1B, SCNN1G, WBP1, WBP2 and ATN1. Interacts with ERBB4, NDFIP1 and NDFIP2. Interacts with ARRDC4. Interacts with POU5F1, RBP1, EGR2 and SLC11A2. Interacts (via WW domains) with ARRDC1 (via PPxY motifs); ubiquitinates ARRDC1. Interacts (via WW domains) with ARRDC2 and ARRDC3. Post-translationally, autoubiquitinated. Ubiquitinated by the SCF(FBXL15) complex, leading to its degradation by the proteasome.

The protein resides in the nucleus. The enzyme catalyses S-ubiquitinyl-[E2 ubiquitin-conjugating enzyme]-L-cysteine + [acceptor protein]-L-lysine = [E2 ubiquitin-conjugating enzyme]-L-cysteine + N(6)-ubiquitinyl-[acceptor protein]-L-lysine.. It functions in the pathway protein modification; protein ubiquitination. Activated by NDFIP1- and NDFIP2-binding. E3 ubiquitin-protein ligase which accepts ubiquitin from an E2 ubiquitin-conjugating enzyme in the form of a thioester and then directly transfers the ubiquitin to targeted substrates. Polyubiquitinates POU5F1 by 'Lys-63'-linked conjugation and promotes it to proteasomal degradation; regulates POU5F1 protein level during differentiation of embryonal carcinoma cells (ECCs) but not in undifferentiated ECCs and embryonic stem cells (ESCs). Ubiquitinates EGR2 and promotes it to proteasomal degradation; in T-cells the ubiquitination inhibits activation-induced cell death. Ubiquitinates SLC11A2; the ubiquitination is enhanced by presence of NDFIP1 and NDFIP2. Ubiquitinates RPB1 and promotes it to proteasomal degradation. This chain is NEDD4-like E3 ubiquitin-protein ligase WWP2 (Wwp2), found in Mus musculus (Mouse).